Consider the following 598-residue polypeptide: (-)-endo-fenchol synthase, chloroplastic (598 aa).

A chloroplast-targeting transit peptide spans 1–34 (MWSTISISMNVAILKKPLNFLHNSNNKASNPRCV). Positions 351, 355, 495, 499, and 503 each coordinate Mg(2+). Positions 351 to 355 (DDVYD) match the DDXXD motif motif.

Belongs to the terpene synthase family. It depends on Mg(2+) as a cofactor. The cofactor is Mn(2+).

Its subcellular location is the plastid. The protein localises to the chloroplast. It catalyses the reaction (2E)-geranyl diphosphate + H2O = (1S,2S,4R)-endo-fenchol + diphosphate. It functions in the pathway secondary metabolite biosynthesis; terpenoid biosynthesis. Its function is as follows. Monoterpene synthase that catalyzes the formation of fenchol from geranyl diphosphate. The sequence is that of (-)-endo-fenchol synthase, chloroplastic (FES) from Ocimum basilicum (Sweet basil).